The sequence spans 313 residues: Ubiquinone biosynthesis protein COQ4, mitochondrial (313 aa).

Zn(2+) is bound by residues His-197, Asp-198, His-201, and Glu-213. Positions 290 to 313 are disordered; sequence QPPDLRELRRKQKKLPEPERENAN. A compositionally biased stretch (basic and acidic residues) spans 303–313; it reads KLPEPERENAN.

This sequence belongs to the COQ4 family. In terms of assembly, component of a multi-subunit COQ enzyme complex, composed of at least COQ3, COQ4, COQ5, COQ6, COQ7 and COQ9. Zn(2+) serves as cofactor.

Its subcellular location is the mitochondrion inner membrane. It catalyses the reaction a 4-hydroxy-3-methoxy-5-(all-trans-polyprenyl)benzoate + H(+) = a 2-methoxy-6-(all-trans-polyprenyl)phenol + CO2. Its pathway is cofactor biosynthesis; ubiquinone biosynthesis. Functionally, lyase that catalyzes the C1-decarboxylation of 4-hydroxy-3-methoxy-5-(all-trans-polyprenyl)benzoic acid into 2-methoxy-6-(all-trans-polyprenyl)phenol during ubiquinone biosynthesis. This is Ubiquinone biosynthesis protein COQ4, mitochondrial from Meyerozyma guilliermondii (strain ATCC 6260 / CBS 566 / DSM 6381 / JCM 1539 / NBRC 10279 / NRRL Y-324) (Yeast).